The primary structure comprises 375 residues: Queuine tRNA-ribosyltransferase (375 aa).

Aspartate 90 serves as the catalytic Proton acceptor. Residues aspartate 90 to phenylalanine 94, aspartate 144, glutamine 193, and glycine 220 each bind substrate. Positions glycine 251 to aspartate 257 are RNA binding. Catalysis depends on aspartate 270, which acts as the Nucleophile. An RNA binding; important for wobble base 34 recognition region spans residues threonine 275 to arginine 279. Zn(2+) is bound by residues cysteine 308, cysteine 310, cysteine 313, and histidine 339.

Belongs to the queuine tRNA-ribosyltransferase family. Homodimer. Within each dimer, one monomer is responsible for RNA recognition and catalysis, while the other monomer binds to the replacement base PreQ1. Zn(2+) serves as cofactor.

The catalysed reaction is 7-aminomethyl-7-carbaguanine + guanosine(34) in tRNA = 7-aminomethyl-7-carbaguanosine(34) in tRNA + guanine. It functions in the pathway tRNA modification; tRNA-queuosine biosynthesis. Catalyzes the base-exchange of a guanine (G) residue with the queuine precursor 7-aminomethyl-7-deazaguanine (PreQ1) at position 34 (anticodon wobble position) in tRNAs with GU(N) anticodons (tRNA-Asp, -Asn, -His and -Tyr). Catalysis occurs through a double-displacement mechanism. The nucleophile active site attacks the C1' of nucleotide 34 to detach the guanine base from the RNA, forming a covalent enzyme-RNA intermediate. The proton acceptor active site deprotonates the incoming PreQ1, allowing a nucleophilic attack on the C1' of the ribose to form the product. After dissociation, two additional enzymatic reactions on the tRNA convert PreQ1 to queuine (Q), resulting in the hypermodified nucleoside queuosine (7-(((4,5-cis-dihydroxy-2-cyclopenten-1-yl)amino)methyl)-7-deazaguanosine). The sequence is that of Queuine tRNA-ribosyltransferase from Herminiimonas arsenicoxydans.